We begin with the raw amino-acid sequence, 515 residues long: 2,3-bisphosphoglycerate-independent phosphoglycerate mutase (515 aa).

2 residues coordinate Mn(2+): aspartate 14 and serine 63. The active site involves serine 63. Residues histidine 124, 154-155 (RD), arginine 186, arginine 192, 259-262 (RADR), and lysine 334 each bind substrate. Mn(2+) contacts are provided by aspartate 401, histidine 405, aspartate 442, histidine 443, and histidine 460.

It belongs to the BPG-independent phosphoglycerate mutase family. The cofactor is Mg(2+). Mn(2+) serves as cofactor.

The catalysed reaction is (2R)-2-phosphoglycerate = (2R)-3-phosphoglycerate. Its pathway is carbohydrate degradation; glycolysis; pyruvate from D-glyceraldehyde 3-phosphate: step 3/5. Its activity is regulated as follows. Activity is not affected by 2,3-bisphosphoglycerate. Functionally, catalyzes the interconversion of 2-phosphoglycerate and 3-phosphoglycerate. The protein is 2,3-bisphosphoglycerate-independent phosphoglycerate mutase of Onchocerca volvulus.